The sequence spans 966 residues: Valine--tRNA ligase (966 aa).

The short motif at 48–58 is the 'HIGH' region element; the sequence is PNITGGLHLGH. Residues 348-368 are a coiled coil; sequence DYKDARKKIIEECKRLKILED. Positions 566–570 match the 'KMSKS' region motif; it reads KMSKS. Lysine 569 is an ATP binding site. Positions 939–960 form a coiled coil; it reads FKKSQEKLNHYNKTKNKLLNQY.

It belongs to the class-I aminoacyl-tRNA synthetase family. ValS type 1 subfamily. Monomer.

The protein resides in the cytoplasm. It catalyses the reaction tRNA(Val) + L-valine + ATP = L-valyl-tRNA(Val) + AMP + diphosphate. Its function is as follows. Catalyzes the attachment of valine to tRNA(Val). As ValRS can inadvertently accommodate and process structurally similar amino acids such as threonine, to avoid such errors, it has a 'posttransfer' editing activity that hydrolyzes mischarged Thr-tRNA(Val) in a tRNA-dependent manner. The sequence is that of Valine--tRNA ligase from Blochmanniella floridana.